A 532-amino-acid chain; its full sequence is Exodeoxyribonuclease 7 large subunit (532 aa).

The tract at residues 497 to 532 is disordered; the sequence is AITTGEGTPAPETAAAPKKKPAKPASSDPGNQGNLF. Low complexity predominate over residues 499–512; the sequence is TTGEGTPAPETAAA.

The protein belongs to the XseA family. Heterooligomer composed of large and small subunits.

Its subcellular location is the cytoplasm. The enzyme catalyses Exonucleolytic cleavage in either 5'- to 3'- or 3'- to 5'-direction to yield nucleoside 5'-phosphates.. Bidirectionally degrades single-stranded DNA into large acid-insoluble oligonucleotides, which are then degraded further into small acid-soluble oligonucleotides. In Agrobacterium fabrum (strain C58 / ATCC 33970) (Agrobacterium tumefaciens (strain C58)), this protein is Exodeoxyribonuclease 7 large subunit.